Reading from the N-terminus, the 212-residue chain is MQLFHLCLIISCTCPTVQASKLCLGWLWGMDIDPYKEFGATVELLSFLPSDFFPSVRDLLDTASALYREALESPEHCSPHHTALRQAILCWGELMTLATWVGVNLEDPASRDLVVSYVNTNMGLKFRQLLWFHISCLTFGRETVIEYLVAFGVWIRTPPAYRPPNAPILSTLPETTVVRRRGRSPRRRTPSPRRRRSQSPRRRRSQSRESQC.

A signal peptide spans 1–19; that stretch reads MQLFHLCLIISCTCPTVQA. The tract at residues 25 to 27 is HBEAG; the sequence is GWL. Residues 165–212 form a disordered region; it reads NAPILSTLPETTVVRRRGRSPRRRTPSPRRRRSQSPRRRRSQSRESQC. Over residues 178 to 205 the composition is skewed to basic residues; that stretch reads VRRRGRSPRRRTPSPRRRRSQSPRRRRS. Residues 184–190 form a 1; half-length repeat; the sequence is SPRRRTP. Residues 184–206 form a 3 X 8 AA repeats of S-P-R-R-R-R-S-Q region; that stretch reads SPRRRTPSPRRRRSQSPRRRRSQ. Positions 184-212 are excised as a propeptide; sequence SPRRRTPSPRRRRSQSPRRRRSQSRESQC. Repeat copies occupy residues 191–198 and 199–206.

The protein belongs to the orthohepadnavirus precore antigen family. Homodimerizes. Phosphorylated. Post-translationally, cleaved by host furin.

The protein localises to the secreted. Its subcellular location is the host nucleus. Functionally, may regulate immune response to the intracellular capsid in acting as a T-cell tolerogen, by having an immunoregulatory effect which prevents destruction of infected cells by cytotoxic T-cells. This immune regulation may predispose to chronicity during perinatal infections and prevent severe liver injury during adult infections. This is External core antigen from Hepatitis B virus genotype D subtype ayw (isolate Italy/CI/1992) (HBV-D).